A 307-amino-acid polypeptide reads, in one-letter code: N-acetylmuramic acid 6-phosphate etherase (307 aa).

The SIS domain occupies I62–K225. E90 functions as the Proton donor in the catalytic mechanism. Residue E121 is part of the active site.

The protein belongs to the GCKR-like family. MurNAc-6-P etherase subfamily. Homodimer.

The catalysed reaction is N-acetyl-D-muramate 6-phosphate + H2O = N-acetyl-D-glucosamine 6-phosphate + (R)-lactate. The protein operates within amino-sugar metabolism; 1,6-anhydro-N-acetylmuramate degradation. It functions in the pathway amino-sugar metabolism; N-acetylmuramate degradation. Its pathway is cell wall biogenesis; peptidoglycan recycling. In terms of biological role, specifically catalyzes the cleavage of the D-lactyl ether substituent of MurNAc 6-phosphate, producing GlcNAc 6-phosphate and D-lactate. Together with AnmK, is also required for the utilization of anhydro-N-acetylmuramic acid (anhMurNAc) either imported from the medium or derived from its own cell wall murein, and thus plays a role in cell wall recycling. The chain is N-acetylmuramic acid 6-phosphate etherase from Pseudoalteromonas atlantica (strain T6c / ATCC BAA-1087).